A 212-amino-acid chain; its full sequence is Peptide methionine sulfoxide reductase MsrA (212 aa).

Cys52 is a catalytic residue.

Belongs to the MsrA Met sulfoxide reductase family.

The enzyme catalyses L-methionyl-[protein] + [thioredoxin]-disulfide + H2O = L-methionyl-(S)-S-oxide-[protein] + [thioredoxin]-dithiol. It catalyses the reaction [thioredoxin]-disulfide + L-methionine + H2O = L-methionine (S)-S-oxide + [thioredoxin]-dithiol. Its function is as follows. Has an important function as a repair enzyme for proteins that have been inactivated by oxidation. Catalyzes the reversible oxidation-reduction of methionine sulfoxide in proteins to methionine. The chain is Peptide methionine sulfoxide reductase MsrA from Escherichia coli O6:K15:H31 (strain 536 / UPEC).